The following is a 309-amino-acid chain: Olfactory receptor 7A10 (309 aa).

Topologically, residues 1–25 (MKSWNNTIILEFLLLGISEEPELQA) are extracellular. Residue asparagine 5 is glycosylated (N-linked (GlcNAc...) asparagine). The helical transmembrane segment at 26–46 (FLFGLFLSMYLVTVLGNLLII) threads the bilayer. Residues 47-54 (LATISDSH) are Cytoplasmic-facing. A helical transmembrane segment spans residues 55–75 (LHTPMYFFLSNLSFVDICFVS). At 76 to 99 (TTVPKMLVNIQTHNKVITYAGCIT) the chain is on the extracellular side. Cysteine 97 and cysteine 189 form a disulfide bridge. Residues 100-120 (QMCFFLLFVGLDNFLLTVMAY) form a helical membrane-spanning segment. Over 121-139 (DRFVAICHPLHYMVIMNPQ) the chain is Cytoplasmic. The helical transmembrane segment at 140 to 160 (LCGLLVLASWIMSVLNSMLQS) threads the bilayer. The Extracellular segment spans residues 161–197 (LMVLPLPFCTHMEIPHFFCEINQVVHLACSDTFLNDI). Residues 198–217 (VMYFAVALLGGGPLTGILYS) traverse the membrane as a helical segment. Topologically, residues 218–237 (YSKIVSSIRAISSAQGKYKA) are cytoplasmic. A helical membrane pass occupies residues 238–258 (FSTCASHLSVVSLFYGTCLGV). At 259-271 (YLSSAATHNSHTG) the chain is on the extracellular side. The helical transmembrane segment at 272–292 (AAASVMYTVVTPMLNPFIYSL) threads the bilayer. The Cytoplasmic portion of the chain corresponds to 293–309 (RNKHIKGAMKTFFRGKQ).

Belongs to the G-protein coupled receptor 1 family.

The protein localises to the cell membrane. In terms of biological role, odorant receptor. This Homo sapiens (Human) protein is Olfactory receptor 7A10 (OR7A10).